Reading from the N-terminus, the 66-residue chain is Protein translocase subunit SecE (66 aa).

The helical transmembrane segment at 41 to 61 (LAVMFIVGFVGFVIYILMEIL) threads the bilayer.

Belongs to the SecE/SEC61-gamma family. As to quaternary structure, component of the Sec protein translocase complex. Heterotrimer consisting of SecY (alpha), SecG (beta) and SecE (gamma) subunits. The heterotrimers can form oligomers, although 1 heterotrimer is thought to be able to translocate proteins. Interacts with the ribosome. May interact with SecDF, and other proteins may be involved.

The protein localises to the cell membrane. In terms of biological role, essential subunit of the Sec protein translocation channel SecYEG. Clamps together the 2 halves of SecY. May contact the channel plug during translocation. This Archaeoglobus fulgidus (strain ATCC 49558 / DSM 4304 / JCM 9628 / NBRC 100126 / VC-16) protein is Protein translocase subunit SecE.